A 227-amino-acid chain; its full sequence is MDQNALKEQTGKESVKYIKSGMIVGLGTGSTVKYMVDELGKQVQEGKIKDIIGVTTSNRTAKQARDLGITIKDIDDVDHIDLTIDGADEISDDFQGIKGGGGALLWEKIVANASNKVMWIVDESKLVHKLGAFPLPVEVIPFGSQHVFDRLEKKGYKPTWRMDGDKKFRTDENNYIIDLHLGEIDDPKALADELIHMVGIVETGLFLNRVNDVIVGTPEGPKVLHAR.

Residues 28–31, 85–88, and 98–101 each bind substrate; these read TGST, DGAD, and KGGG. Glutamate 107 serves as the catalytic Proton acceptor. Residue lysine 125 coordinates substrate.

Belongs to the ribose 5-phosphate isomerase family. In terms of assembly, homodimer.

It carries out the reaction aldehydo-D-ribose 5-phosphate = D-ribulose 5-phosphate. It participates in carbohydrate degradation; pentose phosphate pathway; D-ribose 5-phosphate from D-ribulose 5-phosphate (non-oxidative stage): step 1/1. Functionally, catalyzes the reversible conversion of ribose-5-phosphate to ribulose 5-phosphate. The polypeptide is Ribose-5-phosphate isomerase A (Limosilactobacillus reuteri (strain DSM 20016) (Lactobacillus reuteri)).